The following is a 196-amino-acid chain: ATP-dependent Clp protease proteolytic subunit (196 aa).

The active-site Nucleophile is Ser101. His126 is a catalytic residue.

Belongs to the peptidase S14 family. As to quaternary structure, component of the chloroplastic Clp protease core complex.

The protein resides in the plastid. It is found in the chloroplast stroma. The catalysed reaction is Hydrolysis of proteins to small peptides in the presence of ATP and magnesium. alpha-casein is the usual test substrate. In the absence of ATP, only oligopeptides shorter than five residues are hydrolyzed (such as succinyl-Leu-Tyr-|-NHMec, and Leu-Tyr-Leu-|-Tyr-Trp, in which cleavage of the -Tyr-|-Leu- and -Tyr-|-Trp bonds also occurs).. Cleaves peptides in various proteins in a process that requires ATP hydrolysis. Has a chymotrypsin-like activity. Plays a major role in the degradation of misfolded proteins. In Nicotiana tabacum (Common tobacco), this protein is ATP-dependent Clp protease proteolytic subunit.